The following is a 304-amino-acid chain: Arginine-binding protein ArgT (304 aa).

Residues 1–26 form the signal peptide; sequence MRFPKIPKRAVAATVGIVATSFTLAS. A lipid anchor (N-palmitoyl cysteine) is attached at Cys27. The S-diacylglycerol cysteine moiety is linked to residue Cys27.

This sequence belongs to the bacterial solute-binding protein 3 family. The complex is probably composed of two ATP-binding proteins (ArgV), two transmembrane proteins (ArgU) and a solute-binding protein (ArgT).

Its subcellular location is the cell membrane. Its function is as follows. Part of the ABC transporter complex ArgTUV involved in L-arginine import. May also transport L-citrulline. Binds L-arginine and its molecular precursor L-citrulline, but not L-histidine, L-glutamate, L-glutamine, L-lysine or L-cysteine. This chain is Arginine-binding protein ArgT, found in Corynebacterium glutamicum (strain ATCC 13032 / DSM 20300 / JCM 1318 / BCRC 11384 / CCUG 27702 / LMG 3730 / NBRC 12168 / NCIMB 10025 / NRRL B-2784 / 534).